We begin with the raw amino-acid sequence, 388 residues long: MKWLLLLGLVALSECIIYKVPLVRKKSLRRNLSEHGLLKDFLKKHNLNPASKYFPQAEAPTLIDEQPLENYLDVEYFGTIGIGTPAQDFTVIFDTGSSNLWVPSVYCSSLACTNHNLFNPQDSSTYQSTSGTLSITYGTGSMTGILGYDTVQVGGISDTNQIFGLSETEPGSFLYYAPFDGILGLAYPSISSSGATPVFDNIWDQGLVSQDLFSVYLSADDQSGSVVIFGGIDSSYYTGSLNWVPVSVEGYWQISVDSITMNGEAIACAEGCQAIVDTGTSLLTGPTSPIANIQSDIGASENSDGEMVVSCSAISSLPDIVFTINGIQYPVPPSAYILQSQGSCTSGFQGMDVPTESGELWILGDVFIRQYFTVFDRANNQVGLAPVA.

Positions 1–15 (MKWLLLLGLVALSEC) are cleaved as a signal peptide. 2 propeptides (activation peptide) span residues 16–40 (IIYK…LLKD) and 41–62 (FLKK…APTL). Residues 76–385 (YFGTIGIGTP…DRANNQVGLA (310 aa)) enclose the Peptidase A1 domain. Residue aspartate 94 is part of the active site. Cysteine 107 and cysteine 112 are joined by a disulfide. Serine 130 bears the Phosphoserine mark. Residues cysteine 268 and cysteine 272 are joined by a disulfide bond. Aspartate 277 is an active-site residue. Cysteine 311 and cysteine 344 are oxidised to a cystine.

The protein belongs to the peptidase A1 family. Each pepsinogen is converted to corresponding pepsin at pH 2.0 in part as a result of the release of a 47 AA activation segment and in part as a result of stepwise proteolytic cleavage via an intermediate form(s).

It is found in the secreted. The catalysed reaction is Preferential cleavage: hydrophobic, preferably aromatic, residues in P1 and P1' positions. Cleaves 1-Phe-|-Val-2, 4-Gln-|-His-5, 13-Glu-|-Ala-14, 14-Ala-|-Leu-15, 15-Leu-|-Tyr-16, 16-Tyr-|-Leu-17, 23-Gly-|-Phe-24, 24-Phe-|-Phe-25 and 25-Phe-|-Tyr-26 bonds in the B chain of insulin.. Shows particularly broad specificity; although bonds involving phenylalanine and leucine are preferred, many others are also cleaved to some extent. The sequence is that of Pepsin A-1 (PGA) from Macaca fuscata fuscata (Japanese macaque).